A 344-amino-acid chain; its full sequence is Anthranilate phosphoribosyltransferase (344 aa).

5-phospho-alpha-D-ribose 1-diphosphate is bound by residues Gly-86, 89–90, Thr-94, 96–99, 114–122, and Ser-126; these read GD, NIST, and KHGNKSASG. Gly-86 serves as a coordination point for anthranilate. Ser-98 is a binding site for Mg(2+). Asn-117 provides a ligand contact to anthranilate. Arg-172 provides a ligand contact to anthranilate. Residues Asp-231 and Glu-232 each coordinate Mg(2+).

This sequence belongs to the anthranilate phosphoribosyltransferase family. In terms of assembly, homodimer. The cofactor is Mg(2+).

The enzyme catalyses N-(5-phospho-beta-D-ribosyl)anthranilate + diphosphate = 5-phospho-alpha-D-ribose 1-diphosphate + anthranilate. The protein operates within amino-acid biosynthesis; L-tryptophan biosynthesis; L-tryptophan from chorismate: step 2/5. Catalyzes the transfer of the phosphoribosyl group of 5-phosphorylribose-1-pyrophosphate (PRPP) to anthranilate to yield N-(5'-phosphoribosyl)-anthranilate (PRA). This chain is Anthranilate phosphoribosyltransferase, found in Prochlorococcus marinus (strain AS9601).